Consider the following 86-residue polypeptide: Small ribosomal subunit protein bS20 (86 aa).

A compositionally biased stretch (basic residues) spans 1 to 11 (MANIKSQKKRV). The disordered stretch occupies residues 1–20 (MANIKSQKKRVRTNEKAHQR).

This sequence belongs to the bacterial ribosomal protein bS20 family.

Binds directly to 16S ribosomal RNA. The polypeptide is Small ribosomal subunit protein bS20 (Bifidobacterium animalis subsp. lactis (strain AD011)).